The primary structure comprises 203 residues: ATP-dependent Clp protease proteolytic subunit (203 aa).

The active-site Nucleophile is the Ser107. His132 is an active-site residue.

This sequence belongs to the peptidase S14 family. As to quaternary structure, fourteen ClpP subunits assemble into 2 heptameric rings which stack back to back to give a disk-like structure with a central cavity, resembling the structure of eukaryotic proteasomes.

Its subcellular location is the cytoplasm. The enzyme catalyses Hydrolysis of proteins to small peptides in the presence of ATP and magnesium. alpha-casein is the usual test substrate. In the absence of ATP, only oligopeptides shorter than five residues are hydrolyzed (such as succinyl-Leu-Tyr-|-NHMec, and Leu-Tyr-Leu-|-Tyr-Trp, in which cleavage of the -Tyr-|-Leu- and -Tyr-|-Trp bonds also occurs).. In terms of biological role, cleaves peptides in various proteins in a process that requires ATP hydrolysis. Has a chymotrypsin-like activity. Plays a major role in the degradation of misfolded proteins. The protein is ATP-dependent Clp protease proteolytic subunit of Shewanella denitrificans (strain OS217 / ATCC BAA-1090 / DSM 15013).